We begin with the raw amino-acid sequence, 340 residues long: Ava biosynthesis cluster protein G (340 aa).

4 helical membrane passes run 15–35 (WSAFWLWAIIGGYFAAFNIWN), 81–101 (FMISTDFITSACSVIALLQFV), 118–138 (AFFVMMGFGAPSGIMVAVHAF), and 148–168 (LSIMLTGVLTICFLATSFLCI). Residue asparagine 171 is glycosylated (N-linked (GlcNAc...) asparagine). A run of 2 helical transmembrane segments spans residues 219–239 (FSSVYLIIPEVMNWTLGYVAF) and 315–335 (SALTAVCLLLRYVGLILWLQI).

Its subcellular location is the membrane. It participates in secondary metabolite biosynthesis. Part of the cluster that mediates the biosynthesis of a highly modified cyclo-arginine-tryptophan dipeptide (cRW). The first step of the pathway is perfornmed by the arginine-containing cyclodipeptide synthase (RCPDS) avaA that acts as the scaffold-generating enzyme and is responsible for formation of the cyclo-Arg-Trp (cRW) diketopiperazine. AvaB then acts as a multifunctional flavoenzyme that is responsible for generating the cyclo-Arg-formylkynurenine DKP, which can be deformylated by avaC. AvaB then further catalyzes an additional N-oxidation followed by cyclization and dehydration. The next step is an N-acetylation of the guanidine group catalyzed by the arginine N-acetyltransferase avaD. The roles of the additional enzymes identified within the ava cluster still have to be determined. This Aspergillus versicolor protein is Ava biosynthesis cluster protein G.